A 464-amino-acid polypeptide reads, in one-letter code: Agamous-like MADS-box protein AGL92 (464 aa).

Positions 1–60 (MRTKTKLVLIPDRHFRRATFRKRNAGIRKKLHELTTLCDIKACAVIYSPFENPTVWPSTE) constitute an MADS-box domain. The stretch at 85–114 (ETFLRDQITKEQNKLESLRRENRETQLKHF) forms a coiled coil. The segment at 443-464 (TSTGHMPSTTTTTTNNNNNNNV) is disordered. The segment covering 451–464 (TTTTTTNNNNNNNV) has biased composition (low complexity).

As to quaternary structure, interacts with AGL62.

It localises to the nucleus. Functionally, putative transcription factor. The chain is Agamous-like MADS-box protein AGL92 (AGL92) from Arabidopsis thaliana (Mouse-ear cress).